The sequence spans 1007 residues: Exportin-7 (1007 aa).

The protein belongs to the exportin family.

It localises to the nucleus. It is found in the cytoplasm. The protein localises to the nuclear pore complex. Mediates the nuclear export of proteins (cargos) with broad substrate specificity. This is Exportin-7 (xpo7) from Dictyostelium discoideum (Social amoeba).